The following is a 159-amino-acid chain: uncharacterized protein (159 aa).

Transmembrane regions (helical) follow at residues 17-37 (ALFI…TILV) and 40-60 (LLQF…FKKY).

It localises to the cell membrane. This is an uncharacterized protein from Borreliella burgdorferi (strain ATCC 35210 / DSM 4680 / CIP 102532 / B31) (Borrelia burgdorferi).